Reading from the N-terminus, the 477-residue chain is Aspartyl/glutamyl-tRNA(Asn/Gln) amidotransferase subunit B (477 aa).

The protein belongs to the GatB/GatE family. GatB subfamily. As to quaternary structure, heterotrimer of A, B and C subunits.

The enzyme catalyses L-glutamyl-tRNA(Gln) + L-glutamine + ATP + H2O = L-glutaminyl-tRNA(Gln) + L-glutamate + ADP + phosphate + H(+). It catalyses the reaction L-aspartyl-tRNA(Asn) + L-glutamine + ATP + H2O = L-asparaginyl-tRNA(Asn) + L-glutamate + ADP + phosphate + 2 H(+). Its function is as follows. Allows the formation of correctly charged Asn-tRNA(Asn) or Gln-tRNA(Gln) through the transamidation of misacylated Asp-tRNA(Asn) or Glu-tRNA(Gln) in organisms which lack either or both of asparaginyl-tRNA or glutaminyl-tRNA synthetases. The reaction takes place in the presence of glutamine and ATP through an activated phospho-Asp-tRNA(Asn) or phospho-Glu-tRNA(Gln). This chain is Aspartyl/glutamyl-tRNA(Asn/Gln) amidotransferase subunit B, found in Streptococcus sanguinis (strain SK36).